The chain runs to 870 residues: LPS-assembly protein LptD (870 aa).

The signal sequence occupies residues 1–25; that stretch reads MKQGKSFIFYCLVLLLCGFQQLSSA.

Belongs to the LptD family. As to quaternary structure, component of the lipopolysaccharide transport and assembly complex. Interacts with LptE and LptA.

The protein resides in the cell outer membrane. Functionally, together with LptE, is involved in the assembly of lipopolysaccharide (LPS) at the surface of the outer membrane. This chain is LPS-assembly protein LptD, found in Coxiella burnetii (strain RSA 493 / Nine Mile phase I).